A 208-amino-acid polypeptide reads, in one-letter code: UPF0637 protein BCAH820_3975 (208 aa).

The protein belongs to the UPF0637 family.

This Bacillus cereus (strain AH820) protein is UPF0637 protein BCAH820_3975.